A 202-amino-acid polypeptide reads, in one-letter code: LexA repressor (202 aa).

Active-site for autocatalytic cleavage activity residues include S123 and K159.

The protein belongs to the peptidase S24 family. As to quaternary structure, homodimer.

The catalysed reaction is Hydrolysis of Ala-|-Gly bond in repressor LexA.. Binds the consensus sequence 5'-TGTTC-N(4)-GAACA-3'; some genes have a tandem consensus sequence, at high concentrations their binding is cooperative. Binds to the promoters of a number of genes, including dinB, imuA, lexA, recA, recQ, splB and uvrA. Represses a number of genes involved in the response to DNA damage (SOS response). In the presence of single-stranded DNA, RecA interacts with LexA causing an autocatalytic cleavage which disrupts the DNA-binding part of LexA, leading to derepression of the SOS regulon and eventually DNA repair. This chain is LexA repressor, found in Verrucomicrobium spinosum (strain ATCC 43997 / DSM 4136 / JCM 18804 / IFAM 1439).